A 399-amino-acid polypeptide reads, in one-letter code: P2X purinoceptor 1 (399 aa).

Topologically, residues 1–28 (MARRLQDELSAFFFEYDTPRMVLVRNKK) are cytoplasmic. The helical transmembrane segment at 29-50 (VGVIFRLIQLVVLVYVIGWVFV) threads the bilayer. Residues 51–338 (YEKGYQTSSG…IPTMTTIGSG (288 aa)) lie on the Extracellular side of the membrane. CTP contacts are provided by K68, K70, and K140. K70 contacts ATP. Intrachain disulfides connect C117/C165, C126/C149, and C132/C159. 2 N-linked (GlcNAc...) asparagine glycosylation sites follow: N153 and N184. T186 provides a ligand contact to CTP. Position 186 (T186) interacts with ATP. N210 is a glycosylation site (N-linked (GlcNAc...) asparagine). Cystine bridges form between C217–C227 and C261–C270. ATP contacts are provided by S286, N290, and R292. The CTP site is built by N290 and R292. N300 carries an N-linked (GlcNAc...) asparagine glycan. Residue K309 participates in CTP binding. Residue K309 coordinates ATP. A pore-forming motif region spans residues 331–338 (TMTTIGSG). A helical membrane pass occupies residues 339–358 (IGIFGVATVLCDLLLLHILP). At 359–399 (KRHYYKQKKFKYAEDMGPGEGERDPAATSSTLGLQENMRTS) the chain is on the cytoplasmic side. A disordered region spans residues 374 to 399 (MGPGEGERDPAATSSTLGLQENMRTS). The span at 385–399 (ATSSTLGLQENMRTS) shows a compositional bias: polar residues. S387 and S388 each carry phosphoserine. Position 389 is a phosphothreonine (T389).

Belongs to the P2X receptor family. In terms of assembly, functional P2XRs are organized as homomeric and heteromeric trimers. Forms heterodimer with P2RX2. Forms heterodimer with P2RX4. Forms heterodimer with P2RX5. In terms of tissue distribution, expressed in smooth muscle of the bladder and arteries.

Its subcellular location is the cell membrane. It catalyses the reaction Ca(2+)(in) = Ca(2+)(out). The catalysed reaction is K(+)(in) = K(+)(out). It carries out the reaction Na(+)(in) = Na(+)(out). With respect to regulation, activated by low concentrations of ATP (&lt;1 uM). Undergoes rapid desensitisation. Sensitives to the ATP agonist:alpha/beta-methylene-ATP. Modulated by cholesterol. Functionally, ATP-gated nonselective transmembrane cation channel permeable to potassium, sodium and with relatively high calcium permeability. Furthermore, CTP functions as a weak affinity agonist for P2RX1. Plays a role in male fertility, bladder contraction and platelet aggregation. Specifically, plays an important role in neurogenic contraction of smooth muscle of the vas deferens, and therefore is essential for normal male reproductive function. In addition, contributes to smooth muscle contractions of the urinary bladder. On platelets, contributes to platelet activation and aggregation and thereby, also to thrombosis. On neutrophils, it is involved in chemotaxis and in mitigating the activation of circulating cells. The polypeptide is P2X purinoceptor 1 (P2rx1) (Mus musculus (Mouse)).